Here is a 227-residue protein sequence, read N- to C-terminus: Cytochrome c oxidase subunit 2 (227 aa).

At 1–14 (MAYPFQLGFQDATS) the chain is on the mitochondrial intermembrane side. Residues 15 to 45 (PIMEELLHFHDHTLMIVFLISSLVLYIISSM) traverse the membrane as a helical segment. At 46–59 (LTTKLTHTSTMDAQ) the chain is on the mitochondrial matrix side. Residues 60–87 (EVETIWTILPAIILILIALPSLRILYMM) form a helical membrane-spanning segment. Topologically, residues 88-227 (DEINNPSLTV…HFEEWSASML (140 aa)) are mitochondrial intermembrane. Positions 161, 196, 198, 200, 204, and 207 each coordinate Cu cation. Glu-198 contacts Mg(2+).

It belongs to the cytochrome c oxidase subunit 2 family. In terms of assembly, component of the cytochrome c oxidase (complex IV, CIV), a multisubunit enzyme composed of 14 subunits. The complex is composed of a catalytic core of 3 subunits MT-CO1, MT-CO2 and MT-CO3, encoded in the mitochondrial DNA, and 11 supernumerary subunits COX4I, COX5A, COX5B, COX6A, COX6B, COX6C, COX7A, COX7B, COX7C, COX8 and NDUFA4, which are encoded in the nuclear genome. The complex exists as a monomer or a dimer and forms supercomplexes (SCs) in the inner mitochondrial membrane with NADH-ubiquinone oxidoreductase (complex I, CI) and ubiquinol-cytochrome c oxidoreductase (cytochrome b-c1 complex, complex III, CIII), resulting in different assemblies (supercomplex SCI(1)III(2)IV(1) and megacomplex MCI(2)III(2)IV(2)). Found in a complex with TMEM177, COA6, COX18, COX20, SCO1 and SCO2. Interacts with TMEM177 in a COX20-dependent manner. Interacts with COX20. Interacts with COX16. The cofactor is Cu cation.

Its subcellular location is the mitochondrion inner membrane. It catalyses the reaction 4 Fe(II)-[cytochrome c] + O2 + 8 H(+)(in) = 4 Fe(III)-[cytochrome c] + 2 H2O + 4 H(+)(out). In terms of biological role, component of the cytochrome c oxidase, the last enzyme in the mitochondrial electron transport chain which drives oxidative phosphorylation. The respiratory chain contains 3 multisubunit complexes succinate dehydrogenase (complex II, CII), ubiquinol-cytochrome c oxidoreductase (cytochrome b-c1 complex, complex III, CIII) and cytochrome c oxidase (complex IV, CIV), that cooperate to transfer electrons derived from NADH and succinate to molecular oxygen, creating an electrochemical gradient over the inner membrane that drives transmembrane transport and the ATP synthase. Cytochrome c oxidase is the component of the respiratory chain that catalyzes the reduction of oxygen to water. Electrons originating from reduced cytochrome c in the intermembrane space (IMS) are transferred via the dinuclear copper A center (CU(A)) of subunit 2 and heme A of subunit 1 to the active site in subunit 1, a binuclear center (BNC) formed by heme A3 and copper B (CU(B)). The BNC reduces molecular oxygen to 2 water molecules using 4 electrons from cytochrome c in the IMS and 4 protons from the mitochondrial matrix. The sequence is that of Cytochrome c oxidase subunit 2 (MT-CO2) from Equus caballus (Horse).